The sequence spans 303 residues: Probable 5-dehydro-4-deoxyglucarate dehydratase (303 aa).

This sequence belongs to the DapA family.

The enzyme catalyses 5-dehydro-4-deoxy-D-glucarate + H(+) = 2,5-dioxopentanoate + CO2 + H2O. Its pathway is carbohydrate acid metabolism; D-glucarate degradation; 2,5-dioxopentanoate from D-glucarate: step 2/2. This Pseudomonas putida (strain GB-1) protein is Probable 5-dehydro-4-deoxyglucarate dehydratase.